The primary structure comprises 120 residues: Large ribosomal subunit protein uL22 (120 aa).

The interval 1–25 (MFVNKKYTAKGKNLPSSPKKVRPIA) is disordered.

Belongs to the universal ribosomal protein uL22 family. Part of the 50S ribosomal subunit.

This protein binds specifically to 23S rRNA; its binding is stimulated by other ribosomal proteins, e.g. L4, L17, and L20. It is important during the early stages of 50S assembly. It makes multiple contacts with different domains of the 23S rRNA in the assembled 50S subunit and ribosome. Functionally, the globular domain of the protein is located near the polypeptide exit tunnel on the outside of the subunit, while an extended beta-hairpin is found that lines the wall of the exit tunnel in the center of the 70S ribosome. The chain is Large ribosomal subunit protein uL22 from Borrelia duttonii (strain Ly).